A 972-amino-acid chain; its full sequence is Isoleucine--tRNA ligase (972 aa).

The short motif at P63 to H73 is the 'HIGH' region element. L-isoleucyl-5'-AMP is bound at residue E603. A 'KMSKS' region motif is present at residues K644 to S648. K647 provides a ligand contact to ATP.

Belongs to the class-I aminoacyl-tRNA synthetase family. IleS type 1 subfamily. As to quaternary structure, monomer.

It is found in the cytoplasm. It carries out the reaction tRNA(Ile) + L-isoleucine + ATP = L-isoleucyl-tRNA(Ile) + AMP + diphosphate. Functionally, catalyzes the attachment of isoleucine to tRNA(Ile). As IleRS can inadvertently accommodate and process structurally similar amino acids such as valine, to avoid such errors it has two additional distinct tRNA(Ile)-dependent editing activities. One activity is designated as 'pretransfer' editing and involves the hydrolysis of activated Val-AMP. The other activity is designated 'posttransfer' editing and involves deacylation of mischarged Val-tRNA(Ile). This Brucella suis biovar 1 (strain 1330) protein is Isoleucine--tRNA ligase.